Consider the following 410-residue polypeptide: Putative transposase Rv3428c (410 aa).

The region spanning 40–220 (VPRGPVDAGS…QPLRMFEAVE (181 aa)) is the Integrase catalytic domain. The disordered stretch occupies residues 390-410 (AANEPTTSSPASTAGGVPARP).

Belongs to the transposase IS21/IS408/IS1162 family.

This Mycobacterium tuberculosis (strain ATCC 25618 / H37Rv) protein is Putative transposase Rv3428c.